Reading from the N-terminus, the 556-residue chain is Serine/threonine-protein kinase PksC (556 aa).

One can recognise a Protein kinase domain in the interval 20–287 (YQLRDLLGEG…SAEAMRDECL (268 aa)). ATP-binding positions include 26-34 (LGEGGMASV) and lysine 49. Residue aspartate 151 is the Proton acceptor of the active site. Disordered stretches follow at residues 300–403 (IVPG…PGGK) and 435–485 (EDPE…DPDK). Over residues 336–348 (QPTPSPGPNPYGT) the composition is skewed to pro residues. 2 stretches are compositionally biased toward low complexity: residues 360 to 381 (YPQQ…QAAA) and 445 to 458 (STAS…KAAG). The span at 461–475 (GPDKEKTIEKDKCTE) shows a compositional bias: basic and acidic residues. Residues 482–550 (DPDKIQVPDF…MPEIQLKVST (69 aa)) enclose the PASTA domain.

It belongs to the protein kinase superfamily. Ser/Thr protein kinase family.

It catalyses the reaction L-seryl-[protein] + ATP = O-phospho-L-seryl-[protein] + ADP + H(+). The catalysed reaction is L-threonyl-[protein] + ATP = O-phospho-L-threonyl-[protein] + ADP + H(+). This is Serine/threonine-protein kinase PksC (pksC) from Streptomyces coelicolor (strain ATCC BAA-471 / A3(2) / M145).